The following is a 159-amino-acid chain: Phosphopantetheine adenylyltransferase (159 aa).

Thr-10 is a substrate binding site. ATP-binding positions include 10-11 (TF) and His-18. Lys-42, Met-74, and Arg-88 together coordinate substrate. Residues 89–91 (GLR), Glu-99, and 124–130 (WSFISSS) each bind ATP.

It belongs to the bacterial CoaD family. As to quaternary structure, homohexamer. It depends on Mg(2+) as a cofactor.

The protein resides in the cytoplasm. It catalyses the reaction (R)-4'-phosphopantetheine + ATP + H(+) = 3'-dephospho-CoA + diphosphate. The protein operates within cofactor biosynthesis; coenzyme A biosynthesis; CoA from (R)-pantothenate: step 4/5. Its function is as follows. Reversibly transfers an adenylyl group from ATP to 4'-phosphopantetheine, yielding dephospho-CoA (dPCoA) and pyrophosphate. This chain is Phosphopantetheine adenylyltransferase, found in Salmonella dublin (strain CT_02021853).